The following is a 479-amino-acid chain: U3 snoRNP-associated protein-like EMB2271 (479 aa).

The disordered stretch occupies residues 1 to 73 (MKLEKKKGIG…AHETVGEKRK (73 aa)). A compositionally biased stretch (basic residues) spans 8-17 (GIGAKRRGKK). Basic and acidic residues predominate over residues 18–38 (SSIDHDPFLEEETEKRRKFNY). Positions 39 to 51 (DDDDDIESVESEE) are enriched in acidic residues. Residues 52–73 (EGKVGEEVEDEFAHETVGEKRK) show a composition bias toward basic and acidic residues. 7 WD repeats span residues 143 to 182 (KHQH…SDEY), 204 to 243 (RHNK…HVQA), 246 to 285 (GHCG…YIES), 288 to 326 (GHQS…RLIY), 328 to 366 (ASES…PVFI), 386 to 425 (PACS…SAIQ), and 431 to 471 (PLPG…QNGV).

It belongs to the WD repeat RRP9 family.

The protein localises to the nucleus. It is found in the nucleolus. Functionally, component of a nucleolar small nuclear ribonucleoprotein particle (snoRNP) thought to participate in the processing and modification of pre-ribosomal RNA. Essential for embryogenesis. May function during late embryogenesis. The chain is U3 snoRNP-associated protein-like EMB2271 from Arabidopsis thaliana (Mouse-ear cress).